We begin with the raw amino-acid sequence, 181 residues long: Ninjurin-B (181 aa).

Residues 1–10 (MDSGEVKISL) show a composition bias toward basic and acidic residues. A disordered region spans residues 1–72 (MDSGEVKISL…SNKKCSSDLS (72 aa)). Over 1 to 115 (MDSGEVKISL…YNDKASTYIY (115 aa)) the chain is Extracellular. The span at 12–26 (DSPSSGESFASTTSG) shows a compositional bias: polar residues. Positions 33 to 49 (RDLDIQVHESHIKDDQF) are enriched in basic and acidic residues. Positions 80 to 91 (NKNVAEGLMDIA) are helix alpha1. The segment at 94-110 (SANANQLRFLITYNDKA) is helix alpha2. Residues 116-136 (SMIMVILSLVLQLLVGIMLIF) traverse the membrane as a helical segment. Residues 137-153 (KRRLKRFRNRSYERTND) lie on the Cytoplasmic side of the membrane. Residues 154–174 (LLVMGVFMITVINILLAAFTT) traverse the membrane as a helical segment. Residues 175-181 (TDGGGSH) lie on the Extracellular side of the membrane.

This sequence belongs to the ninjurin family.

Its subcellular location is the membrane. In terms of biological role, effector of non-apoptotic necrotic cell death that mediates plasma membrane rupture (cytolysis): oligomerizes in response to death stimuli and promotes plasma membrane rupture by introducing hydrophilic faces of 2 alpha helices into the hydrophobic membrane, leading to release intracellular molecules that propagate the inflammatory response. Also acts as a homophilic transmembrane adhesion molecule that promotes cell adhesion by mediating homophilic interactions via its extracellular region. This chain is Ninjurin-B, found in Drosophila melanogaster (Fruit fly).